The sequence spans 447 residues: NADP-specific glutamate dehydrogenase (447 aa).

Residues Lys-92, Gln-113, and Lys-116 each contribute to the substrate site. The Proton donor role is filled by Lys-128. Gly-167 contributes to the substrate binding site. Residues Thr-211 and Asn-242 each contribute to the NADP(+) site. Ser-380 contributes to the substrate binding site.

The protein belongs to the Glu/Leu/Phe/Val dehydrogenases family. As to quaternary structure, homohexamer.

The catalysed reaction is L-glutamate + NADP(+) + H2O = 2-oxoglutarate + NH4(+) + NADPH + H(+). In terms of biological role, catalyzes the reversible oxidative deamination of glutamate to alpha-ketoglutarate and ammonia. This is NADP-specific glutamate dehydrogenase (gdhA) from Salmonella typhi.